Reading from the N-terminus, the 130-residue chain is Large ribosomal subunit protein bL19 (130 aa).

It belongs to the bacterial ribosomal protein bL19 family.

Its function is as follows. This protein is located at the 30S-50S ribosomal subunit interface and may play a role in the structure and function of the aminoacyl-tRNA binding site. The chain is Large ribosomal subunit protein bL19 from Burkholderia orbicola (strain MC0-3).